The sequence spans 283 residues: Phosphatidylglycerol--prolipoprotein diacylglyceryl transferase (283 aa).

A run of 4 helical transmembrane segments spans residues 20–40 (IGGF…IIGL), 60–80 (LVIW…VAFE), 94–114 (IWQG…AILV), and 121–141 (LSFW…QAIG). An a 1,2-diacyl-sn-glycero-3-phospho-(1'-sn-glycerol)-binding site is contributed by arginine 142. Transmembrane regions (helical) follow at residues 183-203 (FLYE…LFFY), 214-234 (GTIT…IEGL), and 248-268 (QVVS…LYLL).

It belongs to the Lgt family.

The protein localises to the cell inner membrane. The catalysed reaction is L-cysteinyl-[prolipoprotein] + a 1,2-diacyl-sn-glycero-3-phospho-(1'-sn-glycerol) = an S-1,2-diacyl-sn-glyceryl-L-cysteinyl-[prolipoprotein] + sn-glycerol 1-phosphate + H(+). It functions in the pathway protein modification; lipoprotein biosynthesis (diacylglyceryl transfer). Catalyzes the transfer of the diacylglyceryl group from phosphatidylglycerol to the sulfhydryl group of the N-terminal cysteine of a prolipoprotein, the first step in the formation of mature lipoproteins. In Synechocystis sp. (strain ATCC 27184 / PCC 6803 / Kazusa), this protein is Phosphatidylglycerol--prolipoprotein diacylglyceryl transferase.